Consider the following 485-residue polypeptide: uncharacterized protein (485 aa).

The Cytoplasmic portion of the chain corresponds to methionine 1–serine 30. The chain crosses the membrane as a helical span at residues glycine 31–phenylalanine 51. At cysteine 52–isoleucine 485 the chain is on the extracellular side. Asparagine 67 carries N-linked (GlcNAc...) asparagine glycosylation. A phosphodiesterase region spans residues serine 74 to aspartate 404. The active-site Nucleophile is the threonine 118. N-linked (GlcNAc...) asparagine glycosylation is found at asparagine 306, asparagine 338, asparagine 453, and asparagine 467.

It belongs to the nucleotide pyrophosphatase/phosphodiesterase family.

The protein localises to the membrane. This is an uncharacterized protein from Schizosaccharomyces pombe (strain 972 / ATCC 24843) (Fission yeast).